The chain runs to 395 residues: uncharacterized protein (395 aa).

Residues 182-238 adopt a coiled-coil conformation; sequence KKLEDILSTIAEIEDSIELEKILSLDQFLKSKLSNIKITNNQIDEAKAEFKEMFNKK.

This is an uncharacterized protein from Acanthamoeba polyphaga (Amoeba).